The following is a 529-amino-acid chain: Peptide chain release factor 3 (529 aa).

Positions 11-280 constitute a tr-type G domain; the sequence is AKRRTFAIIS…GLVEWAPAPM (270 aa). GTP is bound by residues 20 to 27, 88 to 92, and 142 to 145; these read SHPDAGKT, DTPGH, and NKLD.

It belongs to the TRAFAC class translation factor GTPase superfamily. Classic translation factor GTPase family. PrfC subfamily.

It is found in the cytoplasm. Increases the formation of ribosomal termination complexes and stimulates activities of RF-1 and RF-2. It binds guanine nucleotides and has strong preference for UGA stop codons. It may interact directly with the ribosome. The stimulation of RF-1 and RF-2 is significantly reduced by GTP and GDP, but not by GMP. The chain is Peptide chain release factor 3 from Shigella flexneri.